The following is an 86-amino-acid chain: UPF0213 protein OB0043 (86 aa).

The region spanning 3–80 (EQHYVYILRC…LPRFEKLKLI (78 aa)) is the GIY-YIG domain.

Belongs to the UPF0213 family.

This is UPF0213 protein OB0043 from Oceanobacillus iheyensis (strain DSM 14371 / CIP 107618 / JCM 11309 / KCTC 3954 / HTE831).